Consider the following 84-residue polypeptide: Large ribosomal subunit protein bL27 (84 aa).

The tract at residues 1-22 (MAHKKAGGSTRNGRDSESKRLG) is disordered.

Belongs to the bacterial ribosomal protein bL27 family.

This chain is Large ribosomal subunit protein bL27, found in Shewanella oneidensis (strain ATCC 700550 / JCM 31522 / CIP 106686 / LMG 19005 / NCIMB 14063 / MR-1).